Here is a 239-residue protein sequence, read N- to C-terminus: MNIEEFTSGLAEKGISLSPRQLEQFELYYDMLVEWNEKINLTSITEKKEVYLKHFYDSITAAFYVDFNQVNTICDVGAGAGFPSLPIKICFPHLHVTIVDSLNKRITFLEKLSEALQLENTTFCHDRAETFGQRKDVRESYDIVTARAVARLSVLSELCLPLVKKNGLFVALKAASAEEELNAGKKAITTLGGELENIHSFKLPIEESDRNIMVIRKIKNTPKKYPRKPGTPNKSPIEG.

S-adenosyl-L-methionine contacts are provided by residues Gly77, Phe82, 128–129, and Arg147; that span reads AE. Positions 219-239 are disordered; that stretch reads KNTPKKYPRKPGTPNKSPIEG.

Belongs to the methyltransferase superfamily. RNA methyltransferase RsmG family.

It localises to the cytoplasm. Functionally, specifically methylates the N7 position of guanine in position 535 of 16S rRNA. The chain is Ribosomal RNA small subunit methyltransferase G from Bacillus subtilis (strain 168).